Reading from the N-terminus, the 586-residue chain is Capsid scaffolding protein (586 aa).

Catalysis depends on charge relay system residues histidine 53, serine 123, and histidine 142. The span at 251–263 (SEETPENAIKDRS) shows a compositional bias: basic and acidic residues. Disordered stretches follow at residues 251-288 (SEETPENAIKDRSVSTQTAPSFDISESQQPSGQTHVPA), 330-364 (ARRDNDRRPVSPSREFSRRSRDSTHECSPGRDIWP), 458-486 (NKRDSEYSENNPRKRSARTISENDPYFPG), and 530-586 (SASN…MMAD). The span at 264 to 284 (VSTQTAPSFDISESQQPSGQT) shows a compositional bias: polar residues. The segment at 312–331 (EDMVYVPFEKYASLLAASAR) is interaction with pAP. 2 interaction with major capsid protein regions span residues 566-586 (DAQTKLKRKKEAAAFAQMMAD) and 567-586 (AQTKLKRKKEAAAFAQMMAD).

The protein belongs to the herpesviridae capsid scaffolding protein family. Homomultimer. Interacts with major capsid protein. As to quaternary structure, exists in a monomer-dimer equilibrium with the dimer being the active species. In terms of processing, capsid scaffolding protein is cleaved by assemblin after formation of the spherical procapsid. As a result, the capsid obtains its mature, icosahedral shape. Cleavages occur at two or more sites: release (R-site) and maturation (M-site).

It localises to the host cytoplasm. The protein resides in the host nucleus. The catalysed reaction is Cleaves -Ala-|-Ser- and -Ala-|-Ala- bonds in the scaffold protein.. Its function is as follows. Acts as a scaffold protein by binding major capsid protein in the cytoplasm, inducing the nuclear localization of both proteins. Multimerizes in the nucleus such as major capsid protein forms the icosahedral T=16 capsid. Autocatalytic cleavage releases the assembly protein, and subsequently abolishes interaction with major capsid protein. Cleavages products are evicted from the capsid before or during DNA packaging. Protease that plays an essential role in virion assembly within the nucleus. Catalyzes the cleavage of the assembly protein after formation of the spherical procapsid. By that cleavage, the capsid matures and gains its icosahedral shape. The cleavage sites seem to include -Ala-Ser-, -Ala-Ala-, as well as Ala-Thr bonds. Assemblin and cleavages products are evicted from the capsid before or during DNA packaging. In terms of biological role, plays a major role in capsid assembly. Acts as a scaffold protein by binding major capsid protein. Multimerizes in the nucleus such as major capsid protein forms the icosahedral T=16 capsid. Cleaved by assemblin after capsid completion. The cleavages products are evicted from the capsid before or during DNA packaging. In Gallus gallus (Chicken), this protein is Capsid scaffolding protein.